We begin with the raw amino-acid sequence, 535 residues long: High affinity immunoglobulin alpha and immunoglobulin mu Fc receptor (535 aa).

The N-terminal stretch at 1–35 is a signal peptide; the sequence is MDQGAPAKPSEQKVPSLRTRWEILLLTLCLLHGSS. Residues 36-455 lie on the Extracellular side of the membrane; the sequence is MTPPHRRSHS…ALMEGESHTR (420 aa). Residues 95–117 form a mediates immunoglobulin Fc fragment-binding region; the sequence is GGAVTIHCHYAPSSVNRHQRKYW. Residues 95 to 189 form the Ig-like V-type domain; it reads GGAVTIHCHY…DMLFFSVNLT (95 aa). A disulfide bond links Cys102 and Cys173. Residue Asn187 is glycosylated (N-linked (GlcNAc...) asparagine). 2 disordered regions span residues 201–360 and 405–430; these read AAPA…LISE and EGRS…QLSV. Low complexity-rich tracts occupy residues 208 to 220 and 241 to 253; these read PTTA…SSAG and TVPT…TTSS. A compositionally biased stretch (polar residues) spans 291-328; that stretch reads KSRSMSSTTQGVWLWSTRNSVTPSVTTSEGRRQGTTPE. Residues 330–346 show a composition bias toward basic and acidic residues; sequence DGPRDETDVRVSPEAPR. Residues 413-429 show a composition bias toward polar residues; the sequence is LENTTEESSPPTPSQLS. The helical transmembrane segment at 456-476 threads the bilayer; it reads ILTPVSTVLALLLIAALILLK. The Cytoplasmic segment spans residues 477–535; it reads RSLGRQRTSQKKERVPRITLIQMTHFLPDKLPDEGKNFQQSNLLPPQASLTVLENDPRP. A disordered region spans residues 507–535; that stretch reads LPDEGKNFQQSNLLPPQASLTVLENDPRP. The span at 513 to 528 shows a compositional bias: polar residues; it reads NFQQSNLLPPQASLTV.

As to quaternary structure, interacts with IGHM; this interaction facilitates the endocytosis of IgM-coated microbes and IgM-antigen immune complexes. N-glycosylated. Expressed in several tissues including thymus, spleen, liver, kidney, small and large intestine, testis and placenta. Expressed by oligodendrocytes, B-cells and macrophages but not granulocytes, T-cells or NK cells (at protein level).

Its subcellular location is the cell membrane. Functions as a receptor for the Fc fragment of IgA and IgM. Binds IgA and IgM with high affinity and mediates their endocytosis. May function in the immune response to microbes mediated by IgA and IgM. In Mus musculus (Mouse), this protein is High affinity immunoglobulin alpha and immunoglobulin mu Fc receptor (Fcamr).